The sequence spans 257 residues: Protein Cmaq_1209 (257 aa).

Belongs to the CinA family.

The protein is Protein Cmaq_1209 of Caldivirga maquilingensis (strain ATCC 700844 / DSM 13496 / JCM 10307 / IC-167).